A 67-amino-acid polypeptide reads, in one-letter code: Conotoxin AbVIO (67 aa).

The first 17 residues, 1 to 17 (VIIIAVLFLTACQLIAT), serve as a signal peptide directing secretion. Positions 18–40 (ASYARSERKHPDLRLSSRNSKLS) are excised as a propeptide. Disulfide bonds link Cys-43/Cys-57, Cys-50/Cys-61, and Cys-56/Cys-66.

Belongs to the conotoxin O1 superfamily. In terms of tissue distribution, expressed by the venom duct.

Its subcellular location is the secreted. This is Conotoxin AbVIO from Conus abbreviatus (Abbreviated cone).